A 453-amino-acid chain; its full sequence is Na(+)/H(+) antiporter NhaA (453 aa).

The next 11 helical transmembrane spans lie at 27–47, 78–98, 114–134, 143–163, 172–192, 201–221, 222–242, 316–336, 346–366, 385–405, and 421–441; these read FLHIEALSGIVLLLAAASALI, LHFWVNDALMTIFFLVAGMEI, ILPIVAAIGGVCVPAIIYFIF, GWAVPTATDIAFALGILALLG, IILLSLAIIDDIIAVLIIAFF, GLLIAGGGIALVLFFQWIGLA, SAWLYILPGAIIWWGLMVTGV, PWVAYGIMPVFAFANAGVSFA, FLIVFGVVIGLFVGKPLGIIT, WAGILLIGFLAGIGFTMSIFV, and IGVLCGSGLSALIGLGYGFIY.

It belongs to the NhaA Na(+)/H(+) (TC 2.A.33) antiporter family.

The protein localises to the cell inner membrane. The catalysed reaction is Na(+)(in) + 2 H(+)(out) = Na(+)(out) + 2 H(+)(in). In terms of biological role, na(+)/H(+) antiporter that extrudes sodium in exchange for external protons. This chain is Na(+)/H(+) antiporter NhaA, found in Bartonella tribocorum (strain CIP 105476 / IBS 506).